The following is a 713-amino-acid chain: Peroxisomal biogenesis factor 8 (713 aa).

The disordered stretch occupies residues 1-31; sequence MYRLGSQGRSIQSQLQNGDSSSGRPLQLQGT. The segment covering 7 to 30 has biased composition (polar residues); that stretch reads QGRSIQSQLQNGDSSSGRPLQLQG. Positions 711–713 match the Microbody targeting signal motif; that stretch reads AKL.

Interacts with PEX5 (via N-terminus).

Its subcellular location is the peroxisome membrane. Functionally, essential component of the machinery required for the import of both PTS1 and PTS2 (and perhaps all) peroxisomal matrix proteins. Binding of PEX8 to the N-terminus of PEX5 cargo receptor induces a conformational change of the TPR domains and decrease their binding affinity to cargo, facilitating the release of the PTS1 proteins within the peroxisome. The sequence is that of Peroxisomal biogenesis factor 8 from Komagataella phaffii (strain GS115 / ATCC 20864) (Yeast).